Consider the following 885-residue polypeptide: MPEQNPLPFPDGQPSPPSTAAADTGATAAALPLAEPVPPAVAPSIAPSVAAARSGKRPWWARLLGRLADPWLSLTIEPDQPGRYDDGRPVVYVLEDYGMSNALILDKACREVGLPSPLVPLPGDPLERKRAYLALSRRSSSNSLIPEQRGGKTHSDSLAKLLQAHRVRADLDVHLVPVSIFVGRAPDKQSGWFAVLFSENWALVGRFRRLLSVLLNGRTTIVRFAPPISLRQTMAEGLPPERTLRKLQRVLRTHFRRIREAVIGPDLSTRRLLVDQVLAAESVREAIAIQAKRDNSKPVDAWRKAHAYAWEIAADYSSPVVRSASFLLTHVWNRIYAGVLVHHLDKLKQAAPGHEVVYVPSHRSHMDYLLLSYLLYERGIVPPHIVAGINLNLPVVGTLLRKGGAFFIRRSIKGNALYSAVLSEYVAQLVAGGYSIEYFVEGGRSRTGRLLQPKGGMIAMTLRAYLRQPRKPVLFQPVYIGYEKLMEGNSYLDELTGRPKEKESIWGLLWSIPKVLKQNYGQVVVNFGEPIALNDVLAKHAPDWDGQPLPEDEKPTWLAPAVDMLSTQIQTRINCAADVNPINLLALALLSTPKHAMGEADLIAQIELCKKLLAEMPYSDRVTVTPHTPARIITHAEEINVLTRVSHPLGDVLSVSGDTAVLLSYFRNNVLHLFTASSWVACCFQNNRRMSRAGLLRLGRTVYPFLQAELFLPWSEDRFAERIEQTIDMFVREGLLLNVTDDDGGILARNTGQTDEVFRLRAIGHSLQQAFERYYIAISVLVKNGPGVLGAGELESLCQQAAQRLSLLYAPAAPEFFDKTLFRGFIQKLRELRLVWPDENSKLMFDERLDAWAKDAKFILGRELRHTIERVSPAAAKPDVVVPPQ.

A compositionally biased stretch (pro residues) spans 1–17 (MPEQNPLPFPDGQPSPP). The disordered stretch occupies residues 1 to 26 (MPEQNPLPFPDGQPSPPSTAAADTGA). Residues 362 to 367 (HRSHMD) carry the HXXXXD motif motif.

Belongs to the GPAT/DAPAT family.

Its subcellular location is the cell inner membrane. It catalyses the reaction sn-glycerol 3-phosphate + an acyl-CoA = a 1-acyl-sn-glycero-3-phosphate + CoA. The protein operates within phospholipid metabolism; CDP-diacylglycerol biosynthesis; CDP-diacylglycerol from sn-glycerol 3-phosphate: step 1/3. The polypeptide is Glycerol-3-phosphate acyltransferase (Xanthomonas axonopodis pv. citri (strain 306)).